A 1148-amino-acid chain; its full sequence is Protocadherin-19 (1148 aa).

Positions 1-21 (MESLLLPVLLLLAILWTQAAA) are cleaved as a signal peptide. Cadherin domains lie at 22 to 129 (LINL…APSF), 130 to 238 (PAAQ…NPVF), 239 to 346 (SEST…PPVI), 350 to 453 (SVNS…HPHF), 454 to 563 (SKPY…TPVI), and 569 to 672 (INGT…QESM). At 22-678 (LINLKYSVEE…QESMGSVNLS (657 aa)) the chain is on the extracellular side. Residues glutamate 31, glutamate 32, aspartate 88, and aspartate 90 each coordinate Ca(2+). A disulfide bridge connects residues cysteine 93 and cysteine 99. Aspartate 121, asparagine 123, aspartate 124, asparagine 125, glutamate 140, aspartate 155, aspartate 157, glutamate 199, aspartate 212, aspartate 230, serine 231, asparagine 232, aspartate 233, asparagine 234, and glutamate 249 together coordinate Ca(2+). N-linked (GlcNAc...) asparagine glycosylation occurs at asparagine 261. Aspartate 264, aspartate 266, asparagine 270, aspartate 305, glutamate 307, aspartate 338, asparagine 340, aspartate 341, asparagine 342, glutamate 360, aspartate 375, aspartate 377, asparagine 381, aspartate 412, and glutamate 414 together coordinate Ca(2+). Residue asparagine 420 is glycosylated (N-linked (GlcNAc...) asparagine). Aspartate 427, aspartate 445, glutamate 446, asparagine 447, aspartate 448, asparagine 449, glutamate 464, aspartate 479, aspartate 481, asparagine 485, asparagine 522, glutamate 524, and aspartate 537 together coordinate Ca(2+). The N-linked (GlcNAc...) asparagine glycan is linked to asparagine 485. Asparagine 546 carries N-linked (GlcNAc...) asparagine glycosylation. Ca(2+) contacts are provided by aspartate 555, valine 556, asparagine 557, aspartate 558, and asparagine 559. The N-linked (GlcNAc...) asparagine glycan is linked to asparagine 570. Aspartate 594, aspartate 596, asparagine 600, and aspartate 646 together coordinate Ca(2+). Asparagine 676 carries N-linked (GlcNAc...) asparagine glycosylation. A helical membrane pass occupies residues 679–699 (LIFIIALGSIAGILFVTMIFV). Residues 700–1148 (AIKCKRDNKE…GVKRLKDIVL (449 aa)) lie on the Cytoplasmic side of the membrane. Disordered regions lie at residues 901–921 (GNSLKDSGHEESDQTDSEHDV) and 1100–1148 (NVNN…DIVL). Basic and acidic residues-rich tracts occupy residues 906 to 921 (DSGHEESDQTDSEHDV), 1109 to 1123 (SEAEPRGADSEKVMH), and 1130 to 1148 (KEGRNKESPGVKRLKDIVL).

As to quaternary structure, homodimer; antiparallel. Moderately expressed in all regions of the brain examined, with lowest levels found in the cerebellum. Moderate expression is also found in ovary, and low expression in all other tissues tested. Also detected in primary skin fibroblast.

The protein resides in the cell membrane. In terms of biological role, calcium-dependent cell-adhesion protein. The polypeptide is Protocadherin-19 (PCDH19) (Homo sapiens (Human)).